Reading from the N-terminus, the 349-residue chain is Variable large protein 19 (349 aa).

The N-terminal stretch at M1 to S18 is a signal peptide. C19 is lipidated: N-palmitoyl cysteine. C19 is lipidated: S-diacylglycerol cysteine.

It belongs to the variable large protein (Vlp) family. Gamma subfamily.

The protein resides in the cell outer membrane. Functionally, the Vlp and Vsp proteins are antigenically distinct proteins, only one vlp or vsp gene is transcriptionally active at any one time. Switching between these genes is a mechanism of host immune response evasion. The protein is Variable large protein 19 of Borrelia hermsii.